The sequence spans 475 residues: Ribulose bisphosphate carboxylase large chain (475 aa).

The propeptide occupies 1–2 (MS). At Pro3 the chain carries N-acetylproline. Residue Lys14 is modified to N6,N6,N6-trimethyllysine. Positions 123 and 173 each coordinate substrate. Residue Lys175 is the Proton acceptor of the active site. Residue Lys177 participates in substrate binding. Lys201, Asp203, and Glu204 together coordinate Mg(2+). The residue at position 201 (Lys201) is an N6-carboxylysine. His294 serves as the catalytic Proton acceptor. Substrate is bound by residues Arg295, His327, and Ser379.

It belongs to the RuBisCO large chain family. Type I subfamily. As to quaternary structure, heterohexadecamer of 8 large chains and 8 small chains; disulfide-linked. The disulfide link is formed within the large subunit homodimers. Requires Mg(2+) as cofactor. In terms of processing, the disulfide bond which can form in the large chain dimeric partners within the hexadecamer appears to be associated with oxidative stress and protein turnover.

It localises to the plastid. Its subcellular location is the chloroplast. It catalyses the reaction 2 (2R)-3-phosphoglycerate + 2 H(+) = D-ribulose 1,5-bisphosphate + CO2 + H2O. It carries out the reaction D-ribulose 1,5-bisphosphate + O2 = 2-phosphoglycolate + (2R)-3-phosphoglycerate + 2 H(+). In terms of biological role, ruBisCO catalyzes two reactions: the carboxylation of D-ribulose 1,5-bisphosphate, the primary event in carbon dioxide fixation, as well as the oxidative fragmentation of the pentose substrate in the photorespiration process. Both reactions occur simultaneously and in competition at the same active site. The polypeptide is Ribulose bisphosphate carboxylase large chain (Liquidambar styraciflua (Sweetgum tree)).